Consider the following 92-residue polypeptide: UPF0298 protein ABC2380 (92 aa).

It belongs to the UPF0298 family.

It is found in the cytoplasm. This chain is UPF0298 protein ABC2380, found in Shouchella clausii (strain KSM-K16) (Alkalihalobacillus clausii).